Consider the following 110-residue polypeptide: Minor capsid protein VP2 (110 aa).

The protein belongs to the vesivirus VP2 protein family. In terms of assembly, homooligomer. The portal-like structure consists in 12 copies of VP2. Interacts with capsid protein VP1.

It localises to the virion. The protein localises to the host cytoplasm. Minor structural protein that forms a portal-like structure at a unique three-fold axis of symmetry, following binding to the host receptor. The channel formed by VP2 may allow the delivery of the viral genome through the host endosomal membrane. This chain is Minor capsid protein VP2, found in Vesicular exanthema of swine virus serotype A48 (isolate Swine/United States/A48/1948) (VESV).